A 239-amino-acid chain; its full sequence is Probable methylthioribulose-1-phosphate dehydratase (239 aa).

Cysteine 100 serves as a coordination point for substrate. Positions 118 and 120 each coordinate Zn(2+). Catalysis depends on glutamate 141, which acts as the Proton donor/acceptor. Histidine 197 serves as a coordination point for Zn(2+).

This sequence belongs to the aldolase class II family. MtnB subfamily. Requires Zn(2+) as cofactor.

Its subcellular location is the cytoplasm. It carries out the reaction 5-(methylsulfanyl)-D-ribulose 1-phosphate = 5-methylsulfanyl-2,3-dioxopentyl phosphate + H2O. It functions in the pathway amino-acid biosynthesis; L-methionine biosynthesis via salvage pathway; L-methionine from S-methyl-5-thio-alpha-D-ribose 1-phosphate: step 2/6. Catalyzes the dehydration of methylthioribulose-1-phosphate (MTRu-1-P) into 2,3-diketo-5-methylthiopentyl-1-phosphate (DK-MTP-1-P). In Leishmania major, this protein is Probable methylthioribulose-1-phosphate dehydratase.